An 845-amino-acid chain; its full sequence is G-type lectin S-receptor-like serine/threonine-protein kinase At1g11410 (845 aa).

The N-terminal stretch at 1-21 (MKFFFIFFIFLFSFLIQSCYS) is a signal peptide. A Bulb-type lectin domain is found at 22-147 (DNTILRSQSL…VTGKSFWESF (126 aa)). At 22 to 441 (DNTILRSQSL…NGNGASGKKR (420 aa)) the chain is on the extracellular side. N82, N103, N185, N231, and N259 each carry an N-linked (GlcNAc...) asparagine glycan. Positions 283-321 (PEDKCDIYNHCGFNGYCDSTSTEKFECSCLPGYEPKTPR) constitute an EGF-like domain. Intrachain disulfides connect C287/C299 and C293/C309. Positions 341-424 (CNGKEGFAKL…SGQDFYLRVD (84 aa)) constitute a PAN domain. Residues N357, N366, and N379 are each glycosylated (N-linked (GlcNAc...) asparagine). Intrachain disulfides connect C372–C399 and C376–C382. Residues 442–462 (LVLILISLIAVVMLLLISFHC) traverse the membrane as a helical segment. Topologically, residues 463 to 845 (YLRKRRQRTQ…DVTLTDVQGR (383 aa)) are cytoplasmic. In terms of domain architecture, Protein kinase spans 523 to 808 (FAFQNKLGAG…DLPSPKHPAF (286 aa)). Residues 529 to 537 (LGAGGFGPV) and K551 each bind ATP. The interval 612–629 (EQRAELDWPKRMGIIRGI) is caM-binding. The active-site Proton acceptor is the D648. The interval 803-845 (PKHPAFTAGRRRNTKTGGSSDNWPSGETSSTINDVTLTDVQGR) is disordered. Over residues 817–845 (KTGGSSDNWPSGETSSTINDVTLTDVQGR) the composition is skewed to polar residues.

This sequence belongs to the protein kinase superfamily. Ser/Thr protein kinase family.

The protein resides in the cell membrane. The enzyme catalyses L-seryl-[protein] + ATP = O-phospho-L-seryl-[protein] + ADP + H(+). The catalysed reaction is L-threonyl-[protein] + ATP = O-phospho-L-threonyl-[protein] + ADP + H(+). The chain is G-type lectin S-receptor-like serine/threonine-protein kinase At1g11410 from Arabidopsis thaliana (Mouse-ear cress).